A 414-amino-acid chain; its full sequence is Glucose-1-phosphate adenylyltransferase (414 aa).

Alpha-D-glucose 1-phosphate contacts are provided by residues Tyr103, Gly168, 183-184 (EK), and Ser201.

It belongs to the bacterial/plant glucose-1-phosphate adenylyltransferase family. As to quaternary structure, homotetramer.

The catalysed reaction is alpha-D-glucose 1-phosphate + ATP + H(+) = ADP-alpha-D-glucose + diphosphate. Its pathway is glycan biosynthesis; glycogen biosynthesis. Its function is as follows. Involved in the biosynthesis of ADP-glucose, a building block required for the elongation reactions to produce glycogen. Catalyzes the reaction between ATP and alpha-D-glucose 1-phosphate (G1P) to produce pyrophosphate and ADP-Glc. The sequence is that of Glucose-1-phosphate adenylyltransferase from Thermus thermophilus (strain ATCC 27634 / DSM 579 / HB8).